The primary structure comprises 318 residues: MYNVTYRLLRLSLISSHSLRKSRSFDVKNFANIHFFIPLPNTPKKFYSVNAFSPLLKARRMTATIVSNHNVGCSCCYFRQYSTKQFRDLNTSEALSPCKAEPIPYKIMSSMSNFSDFKSRFSQYRESHLKLLNELQNVKDTNDLKDRIRLLHLNSSSKLNAFLHDLINAPNVSAEMKENCVRLIFFGRKYDPFLRSRMFTLTIRYFLLQKNRLRTSFYLLKHMELLALPASYELKTTLLEWFLRKRKFETAQKIFLSLCFSQHFPSEKLLMVLLLHGTETMQEYAMIQAINFVNTEQKLRFYDRLHSICSKLKFSSTG.

This is an uncharacterized protein from Schizosaccharomyces pombe (strain 972 / ATCC 24843) (Fission yeast).